Reading from the N-terminus, the 549-residue chain is YTH domain-containing family protein 1 (549 aa).

Disordered stretches follow at residues 29-102 (QAPW…QPNM), 139-165 (GHPP…RQSG), 243-262 (GASG…QQAV), 273-298 (DSTE…AKGP), and 425-458 (REDS…SENK). Residues 49 to 61 (VVGQTQSSPQYNG) are compositionally biased toward polar residues. The segment covering 71–102 (QGYYMPQQQQQQQQMPQYYGGPMSPSQPQPNM) has biased composition (low complexity). Composition is skewed to polar residues over residues 251–260 (TGPSATTPQQ) and 273–289 (DSTE…TPTA). In terms of domain architecture, YTH spans 307–513 (DRFFVLKSLT…SVGRRLIGLF (207 aa)).

It belongs to the YTHDF family. YTHDF1 subfamily.

Specifically recognizes and binds N6-methyladenosine (m6A)-containing mRNAs, and regulates their stability. M6A is a modification present at internal sites of mRNAs and some non-coding RNAs and plays a role in mRNA stability and processing. Directly interacts with the acid phosphatase APHA mRNA to increase its stability. The polypeptide is YTH domain-containing family protein 1 (Cryphonectria parasitica (strain ATCC 38755 / EP155)).